A 215-amino-acid chain; its full sequence is 3-demethoxyubiquinol 3-hydroxylase (215 aa).

Fe cation-binding residues include Glu-64, Glu-94, His-97, Glu-146, Glu-178, and His-181.

This sequence belongs to the COQ7 family. It depends on Fe cation as a cofactor.

It is found in the cell membrane. It catalyses the reaction a 5-methoxy-2-methyl-3-(all-trans-polyprenyl)benzene-1,4-diol + AH2 + O2 = a 3-demethylubiquinol + A + H2O. Its pathway is cofactor biosynthesis; ubiquinone biosynthesis. Catalyzes the hydroxylation of 2-nonaprenyl-3-methyl-6-methoxy-1,4-benzoquinol during ubiquinone biosynthesis. The protein is 3-demethoxyubiquinol 3-hydroxylase of Pseudomonas paraeruginosa (strain DSM 24068 / PA7) (Pseudomonas aeruginosa (strain PA7)).